Consider the following 1076-residue polypeptide: Bifunctional glutamine synthetase adenylyltransferase/adenylyl-removing enzyme (1076 aa).

An adenylyl removase region spans residues 1–521 (MESSIFKPSS…LHLDIYYRPM (521 aa)). The segment at 524 to 1076 (VNAQMENDQI…LERNRRRAQR (553 aa)) is adenylyl transferase. Residues 1042-1056 (TATASAATQQPQTAP) are compositionally biased toward low complexity. Residues 1042–1076 (TATASAATQQPQTAPRPRMHVIAPRLERNRRRAQR) form a disordered region.

Belongs to the GlnE family. Requires Mg(2+) as cofactor.

The catalysed reaction is [glutamine synthetase]-O(4)-(5'-adenylyl)-L-tyrosine + phosphate = [glutamine synthetase]-L-tyrosine + ADP. It carries out the reaction [glutamine synthetase]-L-tyrosine + ATP = [glutamine synthetase]-O(4)-(5'-adenylyl)-L-tyrosine + diphosphate. Involved in the regulation of glutamine synthetase GlnA, a key enzyme in the process to assimilate ammonia. When cellular nitrogen levels are high, the C-terminal adenylyl transferase (AT) inactivates GlnA by covalent transfer of an adenylyl group from ATP to specific tyrosine residue of GlnA, thus reducing its activity. Conversely, when nitrogen levels are low, the N-terminal adenylyl removase (AR) activates GlnA by removing the adenylyl group by phosphorolysis, increasing its activity. The regulatory region of GlnE binds the signal transduction protein PII (GlnB) which indicates the nitrogen status of the cell. In Bifidobacterium longum (strain NCC 2705), this protein is Bifunctional glutamine synthetase adenylyltransferase/adenylyl-removing enzyme.